The chain runs to 327 residues: Serine/threonine-protein phosphatase PP1-1 (327 aa).

4 residues coordinate Mn(2+): Asp-63, His-65, Asp-91, and Asn-123. His-124 functions as the Proton donor in the catalytic mechanism. Mn(2+)-binding residues include His-172 and His-247. A disordered region spans residues 305 to 327; sequence GYQGSSQNWHMTPPRKNKTGNSK. Thr-316 is subject to Phosphothreonine; by CDC2. The segment covering 317-327 has biased composition (basic residues); sequence PPRKNKTGNSK.

Belongs to the PPP phosphatase family. PP-1 subfamily. In terms of assembly, oligomer. Mn(2+) serves as cofactor.

It localises to the nucleus. It carries out the reaction O-phospho-L-seryl-[protein] + H2O = L-seryl-[protein] + phosphate. It catalyses the reaction O-phospho-L-threonyl-[protein] + H2O = L-threonyl-[protein] + phosphate. Functionally, essential role in cell cycle control. PP1 is perhaps required for exit from mitosis. This Schizosaccharomyces pombe (strain 972 / ATCC 24843) (Fission yeast) protein is Serine/threonine-protein phosphatase PP1-1 (dis2).